The following is a 218-amino-acid chain: GTP cyclohydrolase 1 (218 aa).

Zn(2+) is bound by residues C111, H114, and C182.

It belongs to the GTP cyclohydrolase I family. Toroid-shaped homodecamer, composed of two pentamers of five dimers.

It carries out the reaction GTP + H2O = 7,8-dihydroneopterin 3'-triphosphate + formate + H(+). It functions in the pathway cofactor biosynthesis; 7,8-dihydroneopterin triphosphate biosynthesis; 7,8-dihydroneopterin triphosphate from GTP: step 1/1. The sequence is that of GTP cyclohydrolase 1 from Buchnera aphidicola subsp. Schizaphis graminum (strain Sg).